The following is a 571-amino-acid chain: Urease subunit alpha (571 aa).

One can recognise a Urease domain in the interval 132-571 (GAIDTHIHFI…LPMGQKYFLF (440 aa)). Residues His137, His139, and Lys220 each coordinate Ni(2+). At Lys220 the chain carries N6-carboxylysine. Position 222 (His222) interacts with substrate. Ni(2+) is bound by residues His249 and His275. His323 (proton donor) is an active-site residue. Residue Asp363 coordinates Ni(2+).

This sequence belongs to the metallo-dependent hydrolases superfamily. Urease alpha subunit family. As to quaternary structure, heterotrimer of UreA (gamma), UreB (beta) and UreC (alpha) subunits. Three heterotrimers associate to form the active enzyme. The cofactor is Ni cation. Carboxylation allows a single lysine to coordinate two nickel ions.

Its subcellular location is the cytoplasm. It catalyses the reaction urea + 2 H2O + H(+) = hydrogencarbonate + 2 NH4(+). It functions in the pathway nitrogen metabolism; urea degradation; CO(2) and NH(3) from urea (urease route): step 1/1. This is Urease subunit alpha from Corynebacterium urealyticum (strain ATCC 43042 / DSM 7109).